Reading from the N-terminus, the 214-residue chain is MASHEVDNAELGSASAHGTPGSEAGPEELNTSVYQPIDGSPDYQKAKLQVLGAIQILNAAMILALGVFLGSLQYPYHFQKHFFFFTFYTGYPIWGAVFFCSSGTLSVVAGIKPTRTWIQNSFGMNIASATIALVGTAFLSLNIAVNIQSLRSCHSSSESPDLCNYMGSISNGMVSLLLILTLLELCVTISTIAMWCNANCCNSREEISSPPNSV.

The tract at residues 1–31 (MASHEVDNAELGSASAHGTPGSEAGPEELNT) is disordered. Over 1-49 (MASHEVDNAELGSASAHGTPGSEAGPEELNTSVYQPIDGSPDYQKAKLQ) the chain is Cytoplasmic. Residues 50 to 70 (VLGAIQILNAAMILALGVFLG) traverse the membrane as a helical segment. Residues 71–81 (SLQYPYHFQKH) lie on the Extracellular side of the membrane. A helical membrane pass occupies residues 82–102 (FFFFTFYTGYPIWGAVFFCSS). Residues 103–124 (GTLSVVAGIKPTRTWIQNSFGM) are Cytoplasmic-facing. Residues 125–145 (NIASATIALVGTAFLSLNIAV) traverse the membrane as a helical segment. Residues 146–175 (NIQSLRSCHSSSESPDLCNYMGSISNGMVS) are Extracellular-facing. Residues 176–196 (LLLILTLLELCVTISTIAMWC) form a helical membrane-spanning segment. Over 197–214 (NANCCNSREEISSPPNSV) the chain is Cytoplasmic.

Belongs to the MS4A family. In terms of assembly, interacts with CDKN3. Interacts with CDKN3-CDK2 complexes through its binding to CDKN3; this interaction facilitates dissociation of cyclin A from CDKN3-CDK2 complexes. In terms of tissue distribution, expressed specifically in hematopoietic cells and tissues.

The protein localises to the endomembrane system. The protein resides in the cytoplasm. Its subcellular location is the perinuclear region. Functionally, hematopoietic modulator for the G1-S cell cycle transition. Modulates the level of phosphorylation of cyclin-dependent kinase 2 (CDK2) through its direct binding to cyclin-dependent kinase inhibitor 3 (CDKN3/KAP). This Homo sapiens (Human) protein is Membrane-spanning 4-domains subfamily A member 3 (MS4A3).